We begin with the raw amino-acid sequence, 608 residues long: Dihydroxy-acid dehydratase, chloroplastic (608 aa).

The N-terminal 34 residues, 1–34 (MQATIFSPRATLFPCKPLLPSHNVNSRRPSIISC), are a transit peptide targeting the chloroplast. S35 bears the N-acetylserine mark. C100 contacts [2Fe-2S] cluster. Residue D132 coordinates Mg(2+). C173 provides a ligand contact to [2Fe-2S] cluster. Mg(2+) is bound at residue D174. Position 245 (C245) interacts with [2Fe-2S] cluster. E497 contacts Mg(2+). Catalysis depends on S523, which acts as the Proton acceptor.

The protein belongs to the IlvD/Edd family. Requires [2Fe-2S] cluster as cofactor. It depends on Mg(2+) as a cofactor.

It localises to the plastid. The protein resides in the chloroplast. The enzyme catalyses (2R)-2,3-dihydroxy-3-methylbutanoate = 3-methyl-2-oxobutanoate + H2O. It carries out the reaction (2R,3R)-2,3-dihydroxy-3-methylpentanoate = (S)-3-methyl-2-oxopentanoate + H2O. It participates in amino-acid biosynthesis; L-isoleucine biosynthesis; L-isoleucine from 2-oxobutanoate: step 3/4. It functions in the pathway amino-acid biosynthesis; L-valine biosynthesis; L-valine from pyruvate: step 3/4. Is highly competitively inhibited by the fungal sesquiterpenoid aspterric acid, which is effective as a herbicide in spray applications. Its function is as follows. Functions in the biosynthesis of branched-chain amino acids. Catalyzes the dehydration of (2R,3R)-2,3-dihydroxy-3-methylpentanoate (2,3-dihydroxy-3-methylvalerate) into 2-oxo-3-methylpentanoate (2-oxo-3-methylvalerate) and of (2R)-2,3-dihydroxy-3-methylbutanoate (2,3-dihydroxyisovalerate) into 2-oxo-3-methylbutanoate (2-oxoisovalerate), the penultimate precursor to L-isoleucine and L-valine, respectively. The polypeptide is Dihydroxy-acid dehydratase, chloroplastic (Arabidopsis thaliana (Mouse-ear cress)).